Consider the following 428-residue polypeptide: S-adenosylmethionine synthase (428 aa).

H14 is an ATP binding site. D16 serves as a coordination point for Mg(2+). E42 is a K(+) binding site. The L-methionine site is built by E55 and Q98. A flexible loop region spans residues 98 to 108; the sequence is QSGDINRGVER. ATP contacts are provided by residues 165-167, 251-252, D260, 266-267, A283, and K287; these read DAK, KF, and RK. Residue D260 coordinates L-methionine. L-methionine is bound at residue K291.

It belongs to the AdoMet synthase family. Homotetramer; dimer of dimers. The cofactor is Mg(2+). K(+) is required as a cofactor.

The protein resides in the cytoplasm. It catalyses the reaction L-methionine + ATP + H2O = S-adenosyl-L-methionine + phosphate + diphosphate. Its pathway is amino-acid biosynthesis; S-adenosyl-L-methionine biosynthesis; S-adenosyl-L-methionine from L-methionine: step 1/1. Its function is as follows. Catalyzes the formation of S-adenosylmethionine (AdoMet) from methionine and ATP. The overall synthetic reaction is composed of two sequential steps, AdoMet formation and the subsequent tripolyphosphate hydrolysis which occurs prior to release of AdoMet from the enzyme. The protein is S-adenosylmethionine synthase of Parabacteroides distasonis (strain ATCC 8503 / DSM 20701 / CIP 104284 / JCM 5825 / NCTC 11152).